Reading from the N-terminus, the 229-residue chain is Type III pantothenate kinase (229 aa).

Residue 7-14 (DVGNSSVD) coordinates ATP. Substrate is bound by residues Tyr78 and 85–88 (GTDR). Asp87 (proton acceptor) is an active-site residue. Thr110 serves as a coordination point for ATP. Position 161 (Thr161) interacts with substrate.

The protein belongs to the type III pantothenate kinase family. As to quaternary structure, homodimer. It depends on NH4(+) as a cofactor. Requires K(+) as cofactor.

It localises to the cytoplasm. It catalyses the reaction (R)-pantothenate + ATP = (R)-4'-phosphopantothenate + ADP + H(+). Its pathway is cofactor biosynthesis; coenzyme A biosynthesis; CoA from (R)-pantothenate: step 1/5. Functionally, catalyzes the phosphorylation of pantothenate (Pan), the first step in CoA biosynthesis. The protein is Type III pantothenate kinase of Aquifex aeolicus (strain VF5).